The sequence spans 494 residues: ATP synthase subunit alpha 1 (494 aa).

The protein belongs to the ATPase alpha/beta chains family. In terms of assembly, F-type ATPases have 2 components, CF(1) - the catalytic core - and CF(0) - the membrane proton channel. CF(1) has five subunits: alpha(3), beta(3), gamma(1), delta(1), epsilon(1). CF(0) has three main subunits: a(1), b(2) and c(9-12). The alpha and beta chains form an alternating ring which encloses part of the gamma chain. CF(1) is attached to CF(0) by a central stalk formed by the gamma and epsilon chains, while a peripheral stalk is formed by the delta and b chains.

It localises to the cell inner membrane. The catalysed reaction is ATP + H2O + 4 H(+)(in) = ADP + phosphate + 5 H(+)(out). In terms of biological role, produces ATP from ADP in the presence of a proton gradient across the membrane. The alpha chain is a regulatory subunit. This chain is ATP synthase subunit alpha 1, found in Hahella chejuensis (strain KCTC 2396).